Reading from the N-terminus, the 125-residue chain is Holo-[acyl-carrier-protein] synthase (125 aa).

Mg(2+) is bound by residues Asp-8 and Glu-56.

It belongs to the P-Pant transferase superfamily. AcpS family. Mg(2+) serves as cofactor.

It is found in the cytoplasm. It catalyses the reaction apo-[ACP] + CoA = holo-[ACP] + adenosine 3',5'-bisphosphate + H(+). Its function is as follows. Transfers the 4'-phosphopantetheine moiety from coenzyme A to a Ser of acyl-carrier-protein. This is Holo-[acyl-carrier-protein] synthase from Borrelia turicatae (strain 91E135).